Consider the following 431-residue polypeptide: Serine hydroxymethyltransferase 3 (431 aa).

Residues Leu-131 and 135–137 (GHL) each bind (6S)-5,6,7,8-tetrahydrofolate. Lys-240 is subject to N6-(pyridoxal phosphate)lysine.

This sequence belongs to the SHMT family. In terms of assembly, homodimer. Pyridoxal 5'-phosphate is required as a cofactor.

The protein resides in the cytoplasm. It carries out the reaction (6R)-5,10-methylene-5,6,7,8-tetrahydrofolate + glycine + H2O = (6S)-5,6,7,8-tetrahydrofolate + L-serine. The protein operates within one-carbon metabolism; tetrahydrofolate interconversion. It participates in amino-acid biosynthesis; glycine biosynthesis; glycine from L-serine: step 1/1. Its function is as follows. Catalyzes the reversible interconversion of serine and glycine with tetrahydrofolate (THF) serving as the one-carbon carrier. This reaction serves as the major source of one-carbon groups required for the biosynthesis of purines, thymidylate, methionine, and other important biomolecules. Also exhibits THF-independent aldolase activity toward beta-hydroxyamino acids, producing glycine and aldehydes, via a retro-aldol mechanism. The sequence is that of Serine hydroxymethyltransferase 3 from Colwellia psychrerythraea (strain 34H / ATCC BAA-681) (Vibrio psychroerythus).